Consider the following 433-residue polypeptide: uncharacterized protein (433 aa).

This sequence belongs to the mimivirus R160 family.

It is found in the virion. This is an uncharacterized protein from Acanthamoeba polyphaga mimivirus (APMV).